Here is a 331-residue protein sequence, read N- to C-terminus: Probable allantoicase (331 aa).

This sequence belongs to the allantoicase family.

The enzyme catalyses allantoate + H2O = (S)-ureidoglycolate + urea. The protein operates within nitrogen metabolism; (S)-allantoin degradation; (S)-ureidoglycolate from allantoate (aminidohydrolase route): step 1/1. This chain is Probable allantoicase, found in Pseudomonas fluorescens (strain SBW25).